Reading from the N-terminus, the 311-residue chain is MVTWIRGEGLHRQAKEWAREHVKRLEEVGITPKLAIILLNDDPVELATQRRFASLKARDVREVGGEAEIYELHDVPPERRTKEALRLIESLNKRDDVTGVIIQKPVPPFVDERALFAALSPEKDVDALTPDNKKRLLDRFDLDNDVLPCTPAGILELFRMYGIEIRGKDVVVVGKGELVGKPLSVMLMQLDATVTVLHALSKEREPYVKRADIVISAVGRPPEIYRDNPWRLTGEMIKEGVVVVGVGGKVDPISGKWHFDVDEKSVAEKASYLTPNIGGVGLATRARVLKNLIRTSYQVARLVVSSRIVGP.

174–176 is an NADP(+) binding site; that stretch reads GKG.

Belongs to the tetrahydrofolate dehydrogenase/cyclohydrolase family. As to quaternary structure, homodimer.

The enzyme catalyses (6R)-5,10-methylene-5,6,7,8-tetrahydrofolate + NADP(+) = (6R)-5,10-methenyltetrahydrofolate + NADPH. It catalyses the reaction (6R)-5,10-methenyltetrahydrofolate + H2O = (6R)-10-formyltetrahydrofolate + H(+). Its pathway is one-carbon metabolism; tetrahydrofolate interconversion. In terms of biological role, catalyzes the oxidation of 5,10-methylenetetrahydrofolate to 5,10-methenyltetrahydrofolate and then the hydrolysis of 5,10-methenyltetrahydrofolate to 10-formyltetrahydrofolate. The sequence is that of Bifunctional protein FolD from Pyrobaculum arsenaticum (strain DSM 13514 / JCM 11321 / PZ6).